The chain runs to 504 residues: Maturase K (504 aa).

It belongs to the intron maturase 2 family. MatK subfamily.

It is found in the plastid. It localises to the chloroplast. Functionally, usually encoded in the trnK tRNA gene intron. Probably assists in splicing its own and other chloroplast group II introns. This is Maturase K from Carpinus betulus (European hornbeam).